The following is a 347-amino-acid chain: MVEKEEAVISEEEAAQYDRQIRLWGLEAQKRLRTSRVLLVGMRGLGAEVAKNLILAGVKALTLLDHEQVSSEDSRAQFLIPSGSLGQNRAEASLNRARNLNPMVSVEADTENINQKSDDFFTQFDVVCLTSCSRDLLVRVDHICHKHNIKFFTGDVFGYHGYMFADLGEHEFVEEKAKVAKVSKAKQEVEDGPEAKKAKIDPTESILVKKKVQFCPLKDALEIDWHSEKAKSALKKTPTDFFLLQVLMKFRTDKKRDPQPSNYQEDSELLLQICSDVLDSLGVSPDLLPKDFASYCFSEMAPVCAVVGGVLGQEIVKALSQRDAPHNNFFFFDGRSSNGIVDCLGSK.

It belongs to the ubiquitin-activating E1 family. As to quaternary structure, heterodimer of sae1 and uba2/sae2. The heterodimer corresponds to the two domains that are encoded on a single polypeptide chain in ubiquitin-activating enzyme E1. Interacts with ube2i.

It localises to the nucleus. The protein operates within protein modification; protein sumoylation. In terms of biological role, the heterodimer acts as an E1 ligase for sumo1, sumo2, and sumo3. It mediates ATP-dependent activation of sumo proteins followed by formation of a thioester bond between a sumo protein and a conserved active site cysteine residue on uba2/sae2. In Xenopus tropicalis (Western clawed frog), this protein is SUMO-activating enzyme subunit 1 (sae1).